The chain runs to 202 residues: Imidazoleglycerol-phosphate dehydratase (202 aa).

The protein belongs to the imidazoleglycerol-phosphate dehydratase family.

It is found in the cytoplasm. The catalysed reaction is D-erythro-1-(imidazol-4-yl)glycerol 3-phosphate = 3-(imidazol-4-yl)-2-oxopropyl phosphate + H2O. It participates in amino-acid biosynthesis; L-histidine biosynthesis; L-histidine from 5-phospho-alpha-D-ribose 1-diphosphate: step 6/9. This is Imidazoleglycerol-phosphate dehydratase from Clavibacter michiganensis subsp. michiganensis (strain NCPPB 382).